The chain runs to 96 residues: Transcriptional regulator ATRY (96 aa).

The segment at 1–12 (VICTACGQQVNQ) adopts a GATA-type; atypical zinc-finger fold. Positions 1–96 (VICTACGQQV…IAVCDSVLEN (96 aa)) constitute an ADD domain. A PHD-type; atypical zinc finger spans residues 27–82 (LICKRWCAEGGNLICCDSCHNAFCKKCIWRNLGRKEISKIMNEKNEWHCYICCPEP).

This sequence belongs to the SNF2/RAD54 helicase family. In terms of tissue distribution, expressed in developing and adult testis. Also weakly expressed in prostate and epididymis.

Its subcellular location is the nucleus. It catalyses the reaction ATP + H2O = ADP + phosphate + H(+). Could be a global transcriptional regulator. Modifies gene expression by affecting chromatin. This Notamacropus eugenii (Tammar wallaby) protein is Transcriptional regulator ATRY (ATRY).